The following is a 782-amino-acid chain: Protein phosphatase 1 regulatory subunit 12C (782 aa).

Low complexity-rich tracts occupy residues 1-19 (MSGEDGPAAGPGAAAAAAA) and 77-88 (DPGPGSGAASDP). Disordered regions lie at residues 1–45 (MSGE…GERR) and 77–98 (DPGPGSGAASDPAVPPPARAVL). At Ser2 the chain carries N-acetylserine. ANK repeat units lie at residues 104-133 (DGISALHQACIDENLEVVRFLVEQGATVNQ), 137-166 (EGWTPLHVAASCGYLDIARYLLSHGANIAA), 230-259 (TGASALHVAAAKGYIEVMRLLLQAGYDTEL), and 263-292 (DGWTPLHAAAHWGVEDACRLLAEHGGGMDS). The stretch at 301–332 (CDLADEDVMNLLEELAQKQEDLRNQKEGSQGR) forms a coiled coil. A disordered region spans residues 321–685 (DLRNQKEGSQ…HEEPDGGFRK (365 aa)). Residues 332-341 (RGQESQVPSS) are compositionally biased toward polar residues. Positions 353–369 (SSREKISLQDLSKERRP) are enriched in basic and acidic residues. The segment covering 401 to 413 (VSSPVSSNPKSPV) has biased composition (low complexity). Ser403, Ser411, Ser431, Ser454, and Ser509 each carry phosphoserine. Positions 451-465 (RSASSSLLEKASTQA) are enriched in polar residues. Over residues 537-546 (VRDEESESQR) the composition is skewed to basic and acidic residues. The segment covering 547–557 (KARSRLMRQSR) has biased composition (basic residues). At Thr560 the chain carries Phosphothreonine. Ser647 is subject to Phosphoserine. Basic and acidic residues predominate over residues 664–685 (SQRDLVLESKQEHEEPDGGFRK). Residues 681–782 (GGFRKMYTEL…LIRVISKLSK (102 aa)) are a coiled coil.

As to quaternary structure, PP1 comprises a catalytic subunit, PPP1CA, PPP1CB or PPP1CC, and one or several targeting or regulatory subunits. PPP1R12C mediates binding to myosin. Interacts via its N-terminus with PPP1CB. Interacts with IL16. Interacts with the coiled-coil domain of MPRIP. Interacts with NOD2. Phosphorylation at Thr-560 is essential for its interaction with PPP1CB.

The protein localises to the cytoplasm. It localises to the cytoskeleton. It is found in the stress fiber. Functionally, regulates myosin phosphatase activity. The chain is Protein phosphatase 1 regulatory subunit 12C from Mus musculus (Mouse).